We begin with the raw amino-acid sequence, 394 residues long: Salivary plasminogen activator gamma (394 aa).

An N-terminal signal peptide occupies residues 1 to 36 (MVNTMKTKLLCVLLLCGAVFSLPRQETYRQLARGSR). The 82-residue stretch at 45–126 (CYKDQGVTYR…TSESCSVPVC (82 aa)) folds into the Kringle domain. 9 disulfide bridges follow: C45–C126, C66–C108, C97–C121, C131–C262, C174–C190, C182–C251, C276–C351, C308–C324, and C341–C369. A Peptidase S1 domain is found at 143–393 (STGGLFTDIT…YLGWIRDNMR (251 aa)). Residues H189 and D238 each act as charge relay system in the active site. N-linked (GlcNAc...) asparagine glycosylation is present at N315. The Charge relay system role is filled by S345.

Belongs to the peptidase S1 family. In terms of assembly, monomer.

Its subcellular location is the secreted. It carries out the reaction Specific cleavage of Arg-|-Val bond in plasminogen to form plasmin.. In terms of biological role, probably essential to support the feeding habits of this exclusively haematophagous animal. Probable potent thrombolytic agent. The chain is Salivary plasminogen activator gamma from Desmodus rotundus (Vampire bat).